We begin with the raw amino-acid sequence, 20 residues long: Large ribosomal subunit protein uL10 (20 aa).

It belongs to the universal ribosomal protein uL10 family. In terms of assembly, part of the ribosomal stalk of the 50S ribosomal subunit. The N-terminus interacts with L11 and the large rRNA to form the base of the stalk. The C-terminus forms an elongated spine to which L12 dimers bind in a sequential fashion forming a multimeric L10(L12)X complex.

Functionally, forms part of the ribosomal stalk, playing a central role in the interaction of the ribosome with GTP-bound translation factors. The protein is Large ribosomal subunit protein uL10 (rplJ) of Citrobacter freundii.